The sequence spans 1466 residues: Collagen alpha-1(III) chain (1466 aa).

Residues 1–23 (MMSFVQKGSWLLLALLHPTIILA) form the signal peptide. A propeptide spans 24–153 (QQEAVEGGCS…CPTGPQNYSP (130 aa)) (N-terminal propeptide). In terms of domain architecture, VWFC spans 30 to 89 (GGCSHLGQSYADRDVWKPEPCQICVCDSGSVLCDDIICDDQELDCPNPEIPFGECCAVCP). The segment at 95 to 1194 (PTRPPNGQGP…GPPGPPGAPG (1100 aa)) is disordered. Low complexity predominate over residues 99-108 (PNGQGPQGPK). A compositionally biased stretch (polar residues) spans 146-155 (TGPQNYSPQY). Positions 149 to 167 (QNYSPQYDSYDVKSGVAVG) are nonhelical region (N-terminal). The triple-helical region stretch occupies residues 168 to 1196 (GLAGYPGPAG…PGPPGAPGPC (1029 aa)). 17 positions are modified to 4-hydroxyproline: P173, P179, P182, P185, P191, P194, P197, P203, P206, P215, P218, P236, P239, P245, P248, P257, and P260. The segment covering 175–185 (PAGPPGPPGPP) has biased composition (pro residues). The segment covering 187 to 199 (TSGHPGSPGSPGY) has biased composition (low complexity). The span at 229–241 (KDGESGRPGRPGE) shows a compositional bias: basic and acidic residues. Over residues 251–260 (KGPAGIPGFP) the composition is skewed to low complexity. The residue at position 263 (K263) is a 5-hydroxylysine; alternate. An O-linked (Gal...) hydroxylysine; alternate glycan is attached at K263. A compositionally biased stretch (basic and acidic residues) spans 266–277 (RGFDGRNGEKGE). P281 is subject to 4-hydroxyproline. A 5-hydroxylysine modification is found at K284. 4-hydroxyproline is present on residues P290, P296, P305, P311, P314, P332, P335, P338, P344, P347, P359, P365, P371, P383, P386, P392, P404, P407, P416, P425, P434, P443, P455, P458, P470, P473, P479, P488, P500, P512, P524, P530, P533, P539, P542, P545, P551, P554, P563, P566, P575, P581, P590, P599, P602, P608, P620, P635, P644, P650, P656, P659, P661, P668, P671, P680, P686, P692, P701, P703, P713, P716, P722, P728, P737, P746, P749, P755, P770, P776, P785, P788, P797, P806, P812, P815, P821, P830, P839, P845, and P854. Residues 311-322 (PGLPGAAGARGN) show a composition bias toward low complexity. The span at 355-380 (PAGSPGSNGAPGQRGEPGPQGHAGAQ) shows a compositional bias: low complexity. The span at 390-399 (GSPGGKGEMG) shows a compositional bias: gly residues. The span at 404–425 (PGAPGLMGARGPPGPAGANGAP) shows a compositional bias: low complexity. Over residues 426–435 (GLRGGAGEPG) the composition is skewed to gly residues. Low complexity predominate over residues 478 to 523 (LPGAAGERGAPGFRGPAGPNGIPGEKGPAGERGAPGPAGPRGAAGE). The segment covering 528 to 549 (GVPGGPGMRGMPGSPGGPGSDG) has biased composition (gly residues). A compositionally biased stretch (gly residues) spans 642-651 (GLPGTGGPPG). A compositionally biased stretch (gly residues) spans 669–678 (GAPGGKGDAG). The span at 679-692 (APGERGPPGLAGAP) shows a compositional bias: low complexity. Positions 693–711 (GLRGGAGPPGPEGGKGAAG) are enriched in gly residues. Gly residues predominate over residues 729 to 738 (GERGGLGSPG). Positions 787 to 796 (LPGIAGPRGS) are enriched in low complexity. Residues 823 to 835 (GKGERGAPGEKGE) are compositionally biased toward basic and acidic residues. Over residues 836-850 (GGPPGVAGPPGGSGP) the composition is skewed to gly residues. Position 860 is a 5-hydroxylysine (K860). The span at 864–873 (GSPGGPGAAG) shows a compositional bias: gly residues. Residues P866, P869, P875, P881, P884, P890, P892, P899, P905, P914, P917, P929, P935, P941, and P944 each carry the 4-hydroxyproline modification. Residues 890–907 (PGPPGPSGSPGKDGPPGP) are compositionally biased toward pro residues. A compositionally biased stretch (low complexity) spans 908 to 917 (AGNTGAPGSP). Residues 946–961 (PLGIAGITGARGLAGP) show a composition bias toward low complexity. A 4-hydroxyproline mark is found at P962, P965, and P971. A 5-hydroxylysine modification is found at K977. P983, P995, P1001, P1010, P1016, P1022, P1028, P1040, P1043, P1046, P1049, P1052, P1076, and P1085 each carry 4-hydroxyproline. Residues 1046 to 1055 (PGHPGPPGPV) show a composition bias toward pro residues. Residues 1067–1085 (SGPAGPAGAPGPAGSRGAP) show a composition bias toward low complexity. K1106 bears the 5-hydroxylysine mark. Residues P1112, P1115, P1118, P1121, P1133, P1148, P1157, P1163, P1178, P1181, P1184, P1187, P1190, and P1193 each carry the 4-hydroxyproline modification. Positions 1123–1133 (PAGQQGAIGSP) are enriched in low complexity. Over residues 1181–1193 (PGQPGPPGPPGAP) the composition is skewed to pro residues. The nonhelical region (C-terminal) stretch occupies residues 1197 to 1205 (CGGVGAAAI). A propeptide spans 1222 to 1466 (DEPMDFKINT…GVDVGPVCFL (245 aa)) (C-terminal propeptide). The Fibrillar collagen NC1 domain occupies 1232–1466 (DEIMTSLKSV…GVDVGPVCFL (235 aa)). Disulfide bonds link C1262–C1294, C1302–C1464, and C1372–C1417. Residues D1280, N1282, Q1283, C1285, and D1288 each contribute to the Ca(2+) site.

The protein belongs to the fibrillar collagen family. Trimers of identical alpha 1(III) chains. The chains are linked to each other by interchain disulfide bonds. Trimers are also cross-linked via hydroxylysines. Interacts with ADGRG1. Proline residues at the third position of the tripeptide repeating unit (G-X-Y) are hydroxylated in some or all of the chains. Post-translationally, O-linked glycan consists of a Glc-Gal disaccharide bound to the oxygen atom of a post-translationally added hydroxyl group.

The protein localises to the secreted. Its subcellular location is the extracellular space. It is found in the extracellular matrix. In terms of biological role, collagen type III occurs in most soft connective tissues along with type I collagen. Involved in regulation of cortical development. Is the major ligand of ADGRG1 in the developing brain and binding to ADGRG1 inhibits neuronal migration and activates the RhoA pathway by coupling ADGRG1 to GNA13 and possibly GNA12. In Homo sapiens (Human), this protein is Collagen alpha-1(III) chain (COL3A1).